A 321-amino-acid polypeptide reads, in one-letter code: ATP-dependent 6-phosphofructokinase (321 aa).

Gly11 is an ATP binding site. Residue 21–25 (RAVVR) coordinates ADP. Residues 72-73 (RC) and 102-105 (GDGS) contribute to the ATP site. Residue Asp103 participates in Mg(2+) binding. A substrate-binding site is contributed by 126-128 (TID). The active-site Proton acceptor is the Asp128. ADP is bound at residue Arg155. Substrate contacts are provided by residues Arg163 and 170–172 (MGR). Residues 186–188 (GAE), Arg212, and 214–216 (KLH) each bind ADP. Substrate is bound by residues Glu223, Arg245, and 251–254 (HIQR).

The protein belongs to the phosphofructokinase type A (PFKA) family. ATP-dependent PFK group I subfamily. Prokaryotic clade 'B1' sub-subfamily. Homotetramer. Mg(2+) is required as a cofactor.

It localises to the cytoplasm. It catalyses the reaction beta-D-fructose 6-phosphate + ATP = beta-D-fructose 1,6-bisphosphate + ADP + H(+). Its pathway is carbohydrate degradation; glycolysis; D-glyceraldehyde 3-phosphate and glycerone phosphate from D-glucose: step 3/4. Allosterically activated by ADP and other diphosphonucleosides, and allosterically inhibited by phosphoenolpyruvate. In terms of biological role, catalyzes the phosphorylation of D-fructose 6-phosphate to fructose 1,6-bisphosphate by ATP, the first committing step of glycolysis. The chain is ATP-dependent 6-phosphofructokinase from Thermoanaerobacter pseudethanolicus (strain ATCC 33223 / 39E) (Clostridium thermohydrosulfuricum).